The following is a 417-amino-acid chain: Serine--tRNA ligase (417 aa).

224–226 is an L-serine binding site; it reads TSE. ATP-binding positions include 255–257 and Val-271; that span reads RRE. Glu-278 contacts L-serine. 342–345 is an ATP binding site; it reads ELTS. Thr-377 lines the L-serine pocket.

The protein belongs to the class-II aminoacyl-tRNA synthetase family. Type-1 seryl-tRNA synthetase subfamily. In terms of assembly, homodimer. The tRNA molecule binds across the dimer.

The protein localises to the cytoplasm. It carries out the reaction tRNA(Ser) + L-serine + ATP = L-seryl-tRNA(Ser) + AMP + diphosphate + H(+). The enzyme catalyses tRNA(Sec) + L-serine + ATP = L-seryl-tRNA(Sec) + AMP + diphosphate + H(+). It functions in the pathway aminoacyl-tRNA biosynthesis; selenocysteinyl-tRNA(Sec) biosynthesis; L-seryl-tRNA(Sec) from L-serine and tRNA(Sec): step 1/1. In terms of biological role, catalyzes the attachment of serine to tRNA(Ser). Is also able to aminoacylate tRNA(Sec) with serine, to form the misacylated tRNA L-seryl-tRNA(Sec), which will be further converted into selenocysteinyl-tRNA(Sec). The polypeptide is Serine--tRNA ligase (Mycobacterium leprae (strain TN)).